The primary structure comprises 111 residues: Small ubiquitin-related modifier 3 (111 aa).

Residues 16 to 93 (AHVILKVKSQ…IDACRAMSGG (78 aa)) form the Ubiquitin-like domain. A Glycyl lysine isopeptide (Gly-Lys) (interchain with K-? in acceptor proteins) cross-link involves residue Gly-93.

The protein belongs to the ubiquitin family. SUMO subfamily. Interacts with SAE2, SCE1, SIZ1 and MMS21. Covalently attached to a number of proteins. Interacts with NPR1; this interaction promotes NPR1 phosphorylation and triggers its sumoylation and subsequent degradation.

Its subcellular location is the nucleus. It localises to the cytoplasm. In terms of biological role, ubiquitin-like protein which can be covalently attached to target lysines as a monomer. Does not seem to be involved in protein degradation and may function as an antagonist of ubiquitin in the degradation process. Promotes NPR1 sumoylation to activate defense gene expression and regulate its degradation. The sequence is that of Small ubiquitin-related modifier 3 from Arabidopsis thaliana (Mouse-ear cress).